The following is a 295-amino-acid chain: Ethanolamine ammonia-lyase small subunit (295 aa).

Residues V207, E228, and C258 each contribute to the adenosylcob(III)alamin site.

It belongs to the EutC family. In terms of assembly, the basic unit is a heterodimer which dimerizes to form tetramers. The heterotetramers trimerize; 6 large subunits form a core ring with 6 small subunits projecting outwards. Requires adenosylcob(III)alamin as cofactor.

The protein localises to the bacterial microcompartment. The enzyme catalyses ethanolamine = acetaldehyde + NH4(+). It participates in amine and polyamine degradation; ethanolamine degradation. Catalyzes the deamination of various vicinal amino-alcohols to oxo compounds. Allows this organism to utilize ethanolamine as the sole source of nitrogen and carbon in the presence of external vitamin B12. The polypeptide is Ethanolamine ammonia-lyase small subunit (Shigella sonnei (strain Ss046)).